Reading from the N-terminus, the 56-residue chain is Large ribosomal subunit protein bL32 (56 aa).

Residues 1–16 (MAVQKSKKSRSMRGMR) are compositionally biased toward basic residues. The disordered stretch occupies residues 1–21 (MAVQKSKKSRSMRGMRRSHDA).

It belongs to the bacterial ribosomal protein bL32 family.

This Vibrio atlanticus (strain LGP32) (Vibrio splendidus (strain Mel32)) protein is Large ribosomal subunit protein bL32.